Consider the following 333-residue polypeptide: L-lactate dehydrogenase A chain (333 aa).

NAD(+)-binding positions include 30 to 58 and Arg-100; that span reads GAVG…IEDK. Arg-107, Asn-139, and Arg-170 together coordinate substrate. Asn-139 contributes to the NAD(+) binding site. His-194 serves as the catalytic Proton acceptor. Thr-249 contributes to the substrate binding site.

The protein belongs to the LDH/MDH superfamily. LDH family. As to quaternary structure, homotetramer.

The protein localises to the cytoplasm. It carries out the reaction (S)-lactate + NAD(+) = pyruvate + NADH + H(+). It functions in the pathway fermentation; pyruvate fermentation to lactate; (S)-lactate from pyruvate: step 1/1. Functionally, interconverts simultaneously and stereospecifically pyruvate and lactate with concomitant interconversion of NADH and NAD(+). In Ambystoma mexicanum (Axolotl), this protein is L-lactate dehydrogenase A chain (LDHA).